Reading from the N-terminus, the 793-residue chain is Protocadherin beta-7 (793 aa).

An N-terminal signal peptide occupies residues 1 to 26 (MEARVERAVQKRQVLFLCVFLGMSWA). The Extracellular segment spans residues 27–688 (GAEPLRYFVA…DQANSLTVYL (662 aa)). Cadherin domains follow at residues 35–133 (VAEE…APVF), 138–242 (ISLK…APDF), 247–347 (YKVQ…RPEL), 352–451 (LTSP…APAF), and 456–561 (YTLF…SPFV). N169 is a glycosylation site (N-linked (GlcNAc...) asparagine). N418 and N436 each carry an N-linked (GlcNAc...) asparagine glycan. A glycan (N-linked (GlcNAc...) asparagine) is linked at N567. The 104-residue stretch at 568–671 (SSAPCTEPLP…LVDGFSQPYL (104 aa)) folds into the Cadherin 6 domain. A helical membrane pass occupies residues 689–709 (VVALASVSSLFLLSVLLFVAV). Over 710–793 (RLCRRSRAAP…NRPFQNNLGF (84 aa)) the chain is Cytoplasmic.

It is found in the cell membrane. Potential calcium-dependent cell-adhesion protein. May be involved in the establishment and maintenance of specific neuronal connections in the brain. The polypeptide is Protocadherin beta-7 (PCDHB7) (Homo sapiens (Human)).